The chain runs to 428 residues: C4-dicarboxylate transport protein (428 aa).

Helical transmembrane passes span 8-28 (SLYF…HFYP), 44-64 (LIKM…IAGM), 76-96 (VALL…LIIV), 142-162 (IGAF…LFGF), 184-204 (VIFG…FGAM), 222-242 (LIIC…GSIA), 326-346 (IVHQ…AAGV), and 352-372 (IVLA…LALI).

This sequence belongs to the dicarboxylate/amino acid:cation symporter (DAACS) (TC 2.A.23) family.

Its subcellular location is the cell inner membrane. Functionally, responsible for the transport of dicarboxylates such as succinate, fumarate, and malate from the periplasm across the membrane. This Escherichia coli O139:H28 (strain E24377A / ETEC) protein is C4-dicarboxylate transport protein.